The primary structure comprises 553 residues: Solute carrier family 22 member 4 (553 aa).

Residues 1–20 (MRDYDEVIAFLGEWGPFQRL) lie on the Cytoplasmic side of the membrane. A helical transmembrane segment spans residues 21-41 (IFFLLSASIIPNGFNGMSVVF). At 42-142 (LAGTPEHRCL…NLVCEDDWKT (101 aa)) the chain is on the extracellular side. Residues asparagine 57, asparagine 64, and asparagine 91 are each glycosylated (N-linked (GlcNAc...) asparagine). The chain crosses the membrane as a helical span at residues 143-163 (PLTTSLFFVGVLCGSFVSGQL). Residues 164–171 (SDRFGRKK) lie on the Cytoplasmic side of the membrane. The helical transmembrane segment at 172 to 192 (VLFATMAVQTGFSFVQIFSTN) threads the bilayer. Residues 193 to 197 (WEMFT) are Extracellular-facing. The chain crosses the membrane as a helical span at residues 198-218 (VLFAIVGMGQISNYVVAFILG). Residue 218–225 (GTEILSKS) participates in ATP binding. The Cytoplasmic segment spans residues 219–232 (TEILSKSVRIIFST). Residues 233–253 (LGVCTFFAIGYMVLPLFAYFI) form a helical membrane-spanning segment. The Extracellular segment spans residues 254 to 257 (RDWR). A helical membrane pass occupies residues 258-278 (MLLLALTLPGLFCVPLWWFIP). Residues 279–339 (ESPRWLISQR…IILDLFRTRN (61 aa)) lie on the Cytoplasmic side of the membrane. A helical transmembrane segment spans residues 340–360 (IATITVMAVMLWMLTSVGYFA). Residues 361–373 (LSLNVPNLHGDVY) are Extracellular-facing. A helical membrane pass occupies residues 374-394 (LNCFLSGLIEVPAYFTAWLLL). Residues 395–400 (RTLPRR) lie on the Cytoplasmic side of the membrane. Residues 401-421 (YIIAGVLFWGGGVLLLIQVVP) form a helical membrane-spanning segment. Over 422–428 (EDYNFVS) the chain is Extracellular. A helical membrane pass occupies residues 429–449 (IGLVMLGKFGITSAFSMLYVF). Topologically, residues 450–462 (TAELYPTLVRNMA) are cytoplasmic. Residues 463-483 (VGITSMASRVGSIIAPYFVYL) form a helical membrane-spanning segment. Residues 484-488 (GAYNR) lie on the Extracellular side of the membrane. Residues 489–509 (LLPYILMGSLTVLIGIITLFF) traverse the membrane as a helical segment. The Cytoplasmic portion of the chain corresponds to 510–553 (PESFGVTLPENLEQMQKVRGFRCGKKSTVSVDREESPKVLITAF).

The protein belongs to the major facilitator (TC 2.A.1) superfamily. Organic cation transporter (TC 2.A.1.19) family. As to quaternary structure, interacts with PDZK1. As to expression, expressed in kidney. Expressed in small intestines. Expressed in liver in non-parenchymal liver tissue such as sinusoidal vessels. Weakly expressed in lung and brain. Expressed in testis and spleen. Expressed in heart.

It localises to the apical cell membrane. The protein resides in the mitochondrion membrane. Its subcellular location is the basal cell membrane. It carries out the reaction ergothioneine(out) + Na(+)(out) = ergothioneine(in) + Na(+)(in). The catalysed reaction is acetylcholine(in) = acetylcholine(out). It catalyses the reaction (R)-carnitine(out) + Na(+)(out) = (R)-carnitine(in) + Na(+)(in). The enzyme catalyses glycine betaine(out) + Na(+)(out) = glycine betaine(in) + Na(+)(in). Its activity is regulated as follows. Allosterically activated by intracellular ATP. In terms of biological role, transporter that mediates the transport of endogenous and microbial zwitterions and organic cations. Functions as a Na(+)-dependent and pH-dependent high affinity microbial symporter of potent food-derived antioxidant ergothioeine. Transports one sodium ion with one ergothioeine molecule. Involved in the absorption of ergothioneine from the luminal/apical side of the small intestine and renal tubular cells, and into non-parenchymal liver cells, thereby contributing to maintain steady-state ergothioneine level in the body. Also mediates the bidirectional transport of acetycholine, although the exact transport mechanism has not been fully identified yet. Most likely exports anti-inflammatory acetylcholine in non-neuronal tissues, thereby contributing to the non-neuronal cholinergic system. Displays a general physiological role linked to better survival by controlling inflammation and oxidative stress, which may be related to ergothioneine and acetycholine transports. May also function as a low-affinity Na(+)-dependent transporter of L-carnitine through the mitochondrial membrane, thereby maintaining intracellular carnitine homeostasis. May contribute to regulate the transport of cationic compounds in testis across the blood-testis-barrier. The chain is Solute carrier family 22 member 4 from Mus musculus (Mouse).